The sequence spans 95 residues: Cobalt transport protein CbiN (95 aa).

The next 2 membrane-spanning stretches (helical) occupy residues H5–G25 and L67–Y87.

The protein belongs to the CbiN family. Forms an energy-coupling factor (ECF) transporter complex composed of an ATP-binding protein (A component, CbiO), a transmembrane protein (T component, CbiQ) and 2 possible substrate-capture proteins (S components, CbiM and CbiN) of unknown stoichimetry.

It localises to the cell membrane. It participates in cofactor biosynthesis; adenosylcobalamin biosynthesis. In terms of biological role, part of the energy-coupling factor (ECF) transporter complex CbiMNOQ involved in cobalt import. This Methanothermobacter thermautotrophicus (strain ATCC 29096 / DSM 1053 / JCM 10044 / NBRC 100330 / Delta H) (Methanobacterium thermoautotrophicum) protein is Cobalt transport protein CbiN.